Consider the following 150-residue polypeptide: UPF0178 protein PputGB1_5282 (150 aa).

It belongs to the UPF0178 family.

This Pseudomonas putida (strain GB-1) protein is UPF0178 protein PputGB1_5282.